Reading from the N-terminus, the 270-residue chain is Urease accessory protein UreD (270 aa).

Belongs to the UreD family. UreD, UreF and UreG form a complex that acts as a GTP-hydrolysis-dependent molecular chaperone, activating the urease apoprotein by helping to assemble the nickel containing metallocenter of UreC. The UreE protein probably delivers the nickel.

It is found in the cytoplasm. In terms of biological role, required for maturation of urease via the functional incorporation of the urease nickel metallocenter. The protein is Urease accessory protein UreD of Klebsiella pneumoniae.